The following is a 360-amino-acid chain: Photosystem II protein D1 3 (360 aa).

Transmembrane regions (helical) follow at residues 29–46 (YVGW…TAAI), 118–133 (HFLI…QWEL), and 142–156 (WIPV…AATA). His118 is a binding site for chlorophyll a. Pheophytin a is bound at residue Tyr126. The [CaMn4O5] cluster site is built by Asp170 and Glu189. Residues 197–218 (FHMIGVAGVFGGALFSAMHGSL) traverse the membrane as a helical segment. Residue His198 participates in chlorophyll a binding. A quinone contacts are provided by residues His215 and 264 to 265 (SF). His215 contributes to the Fe cation binding site. His272 lines the Fe cation pocket. The chain crosses the membrane as a helical span at residues 274-288 (FLAAWPVIGIWFAAL). Residues His332, Glu333, Asp342, and Ala344 each contribute to the [CaMn4O5] cluster site. Positions 345–360 (SGEVQPIALTAPAIAS) are excised as a propeptide.

Belongs to the reaction center PufL/M/PsbA/D family. In terms of assembly, PSII is composed of 1 copy each of membrane proteins PsbA, PsbB, PsbC, PsbD, PsbE, PsbF, PsbH, PsbI, PsbJ, PsbK, PsbL, PsbM, PsbT, PsbX, PsbY, PsbZ, Psb30/Ycf12, peripheral proteins PsbO, CyanoQ (PsbQ), PsbU, PsbV and a large number of cofactors. It forms dimeric complexes. The D1/D2 heterodimer binds P680, chlorophylls that are the primary electron donor of PSII, and subsequent electron acceptors. It shares a non-heme iron and each subunit binds pheophytin, quinone, additional chlorophylls, carotenoids and lipids. D1 provides most of the ligands for the Mn4-Ca-O5 cluster of the oxygen-evolving complex (OEC). There is also a Cl(-1) ion associated with D1 and D2, which is required for oxygen evolution. The PSII complex binds additional chlorophylls, carotenoids and specific lipids. is required as a cofactor. Tyr-161 forms a radical intermediate that is referred to as redox-active TyrZ, YZ or Y-Z. In terms of processing, C-terminally processed by CtpA; processing is essential to allow assembly of the oxygen-evolving complex and thus photosynthetic growth.

Its subcellular location is the cellular thylakoid membrane. It catalyses the reaction 2 a plastoquinone + 4 hnu + 2 H2O = 2 a plastoquinol + O2. Functionally, photosystem II (PSII) is a light-driven water:plastoquinone oxidoreductase that uses light energy to abstract electrons from H(2)O, generating O(2) and a proton gradient subsequently used for ATP formation. It consists of a core antenna complex that captures photons, and an electron transfer chain that converts photonic excitation into a charge separation. The D1/D2 (PsbA/PsbD) reaction center heterodimer binds P680, the primary electron donor of PSII as well as several subsequent electron acceptors. In Nostoc sp. (strain PCC 7120 / SAG 25.82 / UTEX 2576), this protein is Photosystem II protein D1 3.